The following is a 76-amino-acid chain: MDKKAANGGKEKGPLEACWDEWSRCTGWSSAGTGVLWKSCDDQCKKLGKSGGECVLTPSTCPFTRTDKAYQCQCKK.

Disulfide bonds link Cys-18–Cys-25, Cys-40–Cys-44, Cys-54–Cys-61, and Cys-72–Cys-74.

The protein belongs to the macin family.

Its subcellular location is the secreted. This chain is Neuromacin-like protein, found in Aplysia californica (California sea hare).